The chain runs to 60 residues: Cecropin-B type 1 (60 aa).

Positions 1-24 (MNFNKLFALVLLIGLVLLTGQTEA) are cleaved as a signal peptide. The residue at position 58 (Ile-58) is an Isoleucine amide.

The protein belongs to the cecropin family.

The protein localises to the secreted. In terms of biological role, cecropins have lytic and antibacterial activity against several Gram-positive and Gram-negative bacteria. In Aedes albopictus (Asian tiger mosquito), this protein is Cecropin-B type 1 (CECB1).